The primary structure comprises 3336 residues: Pericentrin (3336 aa).

Disordered stretches follow at residues M1–K71 and G81–D100. The span at T27–K37 shows a compositional bias: basic and acidic residues. S44 is modified (phosphoserine). Residue S188 is modified to Phosphoserine. T191 is subject to Phosphothreonine. Residues H258–L553 are a coiled coil. The tract at residues K569 to S589 is disordered. Phosphoserine occurs at positions 610 and 682. Coiled-coil stretches lie at residues T675 to H835 and T1010 to A1146. S1245 carries the phosphoserine modification. Residues N1299–R1949 adopt a coiled-coil conformation. Positions T1619–E1638 are disordered. Residues P1626–G1636 show a composition bias toward pro residues. A phosphoserine mark is found at S1653 and S1712. The interval R1954 to A1974 is disordered. Residue S2044 is modified to Phosphoserine. A coiled-coil region spans residues V2064–Y2082. The tract at residues S2168–S2214 is disordered. 5 positions are modified to phosphoserine: S2177, S2192, S2225, S2226, and S2327. Polar residues predominate over residues Q2186–L2197. Residues S2318 to R2374 are disordered. The segment covering G2334–D2343 has biased composition (basic and acidic residues). A phosphoserine mark is found at S2352, S2355, S2477, and S2486. Residues Q2536–K3086 are a coiled coil. Disordered regions lie at residues L2875 to W2910 and L3084 to H3126. Composition is skewed to basic and acidic residues over residues E2876 to E2896 and R3092 to E3102. The segment at L2983–T3246 is interaction with NEK2. Residues R3195–R3208 form a calmodulin-binding region. Positions A3224 to E3300 are disordered. The segment covering A3226–P3240 has biased composition (low complexity). The segment covering P3283 to Q3297 has biased composition (polar residues). Phosphoserine is present on S3302.

As to quaternary structure, interacts with CHD3. Interacts with CHD4; the interaction regulates centrosome integrity. Interacts with DISC1 and PCM1. Binds calmodulin. Interacts with CDK5RAP2; the interaction is leading to centrosomal localization of PCNT and CDK5RAP2. Interacts with isoform 1 of NEK2. Interacts with CEP131. Interacts with CCDC13. Interacts with CEP68. Interacts with ATF5; the ATF5:PCNT:polyglutamylated tubulin (PGT) tripartite unites the mother centriole and the pericentriolar material (PCM) in the centrosome. Post-translationally, cleaved during mitotis which leads to removal of CDK5RAP2 from the centrosome and promotes centriole disengagement and subsequent centriole separation. The C-terminal fragment is rapidly degraded following cleavage. Ubiquitinated by TRIM43; leading to proteasomal degradation. As to expression, expressed in all tissues tested, including placenta, liver, kidney and thymus.

The protein resides in the cytoplasm. It is found in the cytoskeleton. It localises to the microtubule organizing center. Its subcellular location is the centrosome. Functionally, integral component of the filamentous matrix of the centrosome involved in the initial establishment of organized microtubule arrays in both mitosis and meiosis. Plays a role, together with DISC1, in the microtubule network formation. Is an integral component of the pericentriolar material (PCM). May play an important role in preventing premature centrosome splitting during interphase by inhibiting NEK2 kinase activity at the centrosome. The chain is Pericentrin (PCNT) from Homo sapiens (Human).